We begin with the raw amino-acid sequence, 510 residues long: Rab proteins geranylgeranyltransferase component A 1 (510 aa).

Belongs to the Rab GDI family. In terms of assembly, may interact with rab-5, rab-7 and rab-11. Does not interact with rab-3, rab-27 and rab-10. As to expression, expressed in several neurons including head neurons, motor neurons located in the ventral nerve cord, HSN and CAN neurons, and tail neurons, and in muscles such as body-wall, pharyngeal, intestinal and anal sphincter. Also expressed in seam cells, the hypodermis and the intestine.

The protein localises to the cytoplasm. Functionally, substrate-binding subunit of the Rab geranylgeranyltransferase (GGTase) complex. Binds unprenylated Rab proteins and presents the substrate peptide to the catalytic component B and remains bound to it after the geranylgeranyl transfer reaction. The component A is thought to be regenerated by transferring its prenylated Rab back to the donor membrane. Plays a role in neurotransmitter release from presynaptic terminals at neuromuscular junctions. Positively regulates the function of rab-27 in synaptic transmission most likely through mediating rab-27 prenylation. The protein is Rab proteins geranylgeranyltransferase component A 1 of Caenorhabditis elegans.